The primary structure comprises 289 residues: GTPase Era (289 aa).

The Era-type G domain occupies 2 to 167 (KSGFVSLIGR…LREIAKLLPE (166 aa)). The segment at 10–17 (GRTNAGKS) is G1. Position 10–17 (10–17 (GRTNAGKS)) interacts with GTP. Residues 36 to 40 (NATRR) are G2. Residues 57 to 60 (DTPG) form a G3 region. GTP contacts are provided by residues 57 to 61 (DTPGL) and 116 to 119 (TKTD). Residues 116–119 (TKTD) form a G4 region. The interval 146-148 (VNI) is G5. The KH type-2 domain occupies 186–274 (YRDFILESVY…HLNLQIFVKK (89 aa)).

This sequence belongs to the TRAFAC class TrmE-Era-EngA-EngB-Septin-like GTPase superfamily. Era GTPase family. As to quaternary structure, monomer.

Its subcellular location is the cytoplasm. The protein localises to the cell inner membrane. Functionally, an essential GTPase that binds both GDP and GTP, with rapid nucleotide exchange. Plays a role in 16S rRNA processing and 30S ribosomal subunit biogenesis and possibly also in cell cycle regulation and energy metabolism. The sequence is that of GTPase Era from Campylobacter hominis (strain ATCC BAA-381 / DSM 21671 / CCUG 45161 / LMG 19568 / NCTC 13146 / CH001A).